The primary structure comprises 217 residues: Small ribosomal subunit protein uS3 (217 aa).

Residues 38–106 (IRKFIDNELK…KVHINVIEIK (69 aa)) form the KH type-2 domain.

The protein belongs to the universal ribosomal protein uS3 family. Part of the 30S ribosomal subunit. Forms a tight complex with proteins S10 and S14.

Its function is as follows. Binds the lower part of the 30S subunit head. Binds mRNA in the 70S ribosome, positioning it for translation. The polypeptide is Small ribosomal subunit protein uS3 (Staphylococcus aureus (strain MSSA476)).